The sequence spans 297 residues: Indole-3-glycerol phosphate synthase (297 aa).

The protein belongs to the TrpC family.

It carries out the reaction 1-(2-carboxyphenylamino)-1-deoxy-D-ribulose 5-phosphate + H(+) = (1S,2R)-1-C-(indol-3-yl)glycerol 3-phosphate + CO2 + H2O. It functions in the pathway amino-acid biosynthesis; L-tryptophan biosynthesis; L-tryptophan from chorismate: step 4/5. This Trichodesmium erythraeum (strain IMS101) protein is Indole-3-glycerol phosphate synthase.